Reading from the N-terminus, the 168-residue chain is Protein-export protein SecB (168 aa).

Positions 1-21 (MADQPSGNNDAKQAETNGNTV) are disordered.

It belongs to the SecB family. In terms of assembly, homotetramer, a dimer of dimers. One homotetramer interacts with 1 SecA dimer.

It localises to the cytoplasm. Its function is as follows. One of the proteins required for the normal export of preproteins out of the cell cytoplasm. It is a molecular chaperone that binds to a subset of precursor proteins, maintaining them in a translocation-competent state. It also specifically binds to its receptor SecA. In Chelativorans sp. (strain BNC1), this protein is Protein-export protein SecB.